Consider the following 241-residue polypeptide: Small ribosomal subunit protein uS3 (241 aa).

A KH type-2 domain is found at 39–109 (VRNYVNKNLS…PIRINVVEVA (71 aa)). A disordered region spans residues 213-241 (ADEQPTNREPQQRRRQQQRRRQQFEDRSE).

It belongs to the universal ribosomal protein uS3 family. In terms of assembly, part of the 30S ribosomal subunit. Forms a tight complex with proteins S10 and S14.

Its function is as follows. Binds the lower part of the 30S subunit head. Binds mRNA in the 70S ribosome, positioning it for translation. This chain is Small ribosomal subunit protein uS3, found in Acaryochloris marina (strain MBIC 11017).